The sequence spans 78 residues: Acyl carrier protein AcpP (78 aa).

The Carrier domain maps to 2 to 77 (SDTAERVKKI…DAVKYIDKAS (76 aa)). S37 bears the O-(pantetheine 4'-phosphoryl)serine mark.

It belongs to the acyl carrier protein (ACP) family. 4'-phosphopantetheine is transferred from CoA to a specific serine of apo-ACP by AcpS. This modification is essential for activity because fatty acids are bound in thioester linkage to the sulfhydryl of the prosthetic group.

It is found in the cytoplasm. It functions in the pathway lipid metabolism; fatty acid biosynthesis. In terms of biological role, carrier of the growing fatty acid chain in fatty acid biosynthesis. The polypeptide is Acyl carrier protein AcpP (Mesorhizobium japonicum (strain LMG 29417 / CECT 9101 / MAFF 303099) (Mesorhizobium loti (strain MAFF 303099))).